A 470-amino-acid chain; its full sequence is Hydroxymethylglutaryl-CoA synthase (470 aa).

Residue Glu100 is the Proton donor/acceptor of the active site. The active-site Acyl-thioester intermediate is the Cys134. Residues Cys134, Thr176, Ser225, His269, Lys278, Asn348, and Ser382 each coordinate (3S)-3-hydroxy-3-methylglutaryl-CoA. Residue His269 is the Proton donor/acceptor of the active site.

Belongs to the thiolase-like superfamily. HMG-CoA synthase family.

The enzyme catalyses acetoacetyl-CoA + acetyl-CoA + H2O = (3S)-3-hydroxy-3-methylglutaryl-CoA + CoA + H(+). It participates in metabolic intermediate biosynthesis; (R)-mevalonate biosynthesis; (R)-mevalonate from acetyl-CoA: step 2/3. Hydroxymethylglutaryl-CoA synthase; part of the first module of ergosterol biosynthesis pathway that includes the early steps of the pathway, conserved across all eukaryotes, and which results in the formation of mevalonate from acetyl-coenzyme A (acetyl-CoA). This module also plays a key role in the biosynthesis of triterpenes such as ganoderic acids (GA), a group of highly oxygenated lanostane-type triterpenoids which are well recognized as a main group of unique bioactive compounds in the medicinal mushroom Ganoderma lucidum. In this module, the acetyl-CoA acetyltransferase catalyzes the formation of acetoacetyl-CoA. The hydroxymethylglutaryl-CoA synthase HMGS then condenses acetyl-CoA with acetoacetyl-CoA to form HMG-CoA. The rate-limiting step of the early module is the reduction to mevalonate by the 3-hydroxy-3-methylglutaryl-coenzyme A (HMG-CoA) reductase. This Ganoderma lucidum (Ling zhi medicinal fungus) protein is Hydroxymethylglutaryl-CoA synthase.